The chain runs to 516 residues: GMP synthase [glutamine-hydrolyzing] (516 aa).

The 195-residue stretch at Ser5–Lys199 folds into the Glutamine amidotransferase type-1 domain. Cys82 functions as the Nucleophile in the catalytic mechanism. Active-site residues include His173 and Glu175. The region spanning Trp200 to Arg391 is the GMPS ATP-PPase domain. Residue Ser227 to Ser233 coordinates ATP.

Homodimer.

It carries out the reaction XMP + L-glutamine + ATP + H2O = GMP + L-glutamate + AMP + diphosphate + 2 H(+). It functions in the pathway purine metabolism; GMP biosynthesis; GMP from XMP (L-Gln route): step 1/1. Its function is as follows. Catalyzes the synthesis of GMP from XMP. The chain is GMP synthase [glutamine-hydrolyzing] from Sulfurimonas denitrificans (strain ATCC 33889 / DSM 1251) (Thiomicrospira denitrificans (strain ATCC 33889 / DSM 1251)).